Reading from the N-terminus, the 320-residue chain is 3-ketodihydrosphingosine reductase TSC10 (320 aa).

Residues 1 to 254 are Cytoplasmic-facing; that stretch reads MKFTLEDQVV…IIAKSLARGD (254 aa). Position 11 (leucine 11) interacts with NADP(+). NADPH is bound by residues glycine 14, serine 16, and glycine 18. Positions 14–18 match the GXSXG motif; that stretch reads GGSQG. Leucine 19 lines the NADP(+) pocket. Residues arginine 41, arginine 45, aspartate 89, and leucine 90 each coordinate NADPH. NADP(+) is bound at residue aspartate 89. Residue serine 166 is the Proton donor of the active site. The NADP(+) site is built by tyrosine 180, lysine 184, and serine 213. The active-site Proton acceptor is the tyrosine 180. Lysine 184 functions as the Lowers pKa of active site Tyr in the catalytic mechanism. A helical membrane pass occupies residues 255–275; that stretch reads DDVFTDFVGWMIMGMDLGLTA. Topologically, residues 276–279 are lumenal; it reads KKSR. Residues 280-300 traverse the membrane as a helical segment; sequence FVPLQWIFGVLSNILVVPFYM. Residues 301–320 are Cytoplasmic-facing; that stretch reads VGCSWYIRKWFRENDGKKAN.

It belongs to the short-chain dehydrogenases/reductases (SDR) family. Dimer or tetramer.

It localises to the endoplasmic reticulum membrane. It carries out the reaction sphinganine + NADP(+) = 3-oxosphinganine + NADPH + H(+). It functions in the pathway lipid metabolism; sphingolipid metabolism. Its function is as follows. Catalyzes the reduction of 3'-oxosphinganine (3-ketodihydrosphingosine/KDS) to sphinganine (dihydrosphingosine/DHS), the second step of de novo sphingolipid biosynthesis. The sequence is that of 3-ketodihydrosphingosine reductase TSC10 from Saccharomyces cerevisiae (strain ATCC 204508 / S288c) (Baker's yeast).